Here is a 227-residue protein sequence, read N- to C-terminus: dTTP/UTP pyrophosphatase (227 aa).

A disordered region spans residues 1 to 21 (MNDLPRAELPGSGSPNPESLI). Residue Asp-87 is the Proton acceptor of the active site.

This sequence belongs to the Maf family. YhdE subfamily. Requires a divalent metal cation as cofactor.

It localises to the cytoplasm. The catalysed reaction is dTTP + H2O = dTMP + diphosphate + H(+). The enzyme catalyses UTP + H2O = UMP + diphosphate + H(+). In terms of biological role, nucleoside triphosphate pyrophosphatase that hydrolyzes dTTP and UTP. May have a dual role in cell division arrest and in preventing the incorporation of modified nucleotides into cellular nucleic acids. This is dTTP/UTP pyrophosphatase from Rhodopirellula baltica (strain DSM 10527 / NCIMB 13988 / SH1).